The sequence spans 114 residues: UPF0102 protein Amet_2739 (114 aa).

This sequence belongs to the UPF0102 family.

This Alkaliphilus metalliredigens (strain QYMF) protein is UPF0102 protein Amet_2739.